Consider the following 301-residue polypeptide: Ornithine carbamoyltransferase (301 aa).

Carbamoyl phosphate-binding positions include arginine 100 and 127 to 130; that span reads HPCQ. Residues asparagine 158, aspartate 221, and 225–226 each bind L-ornithine; that span reads SM. Carbamoyl phosphate-binding residues include cysteine 260 and arginine 288.

This sequence belongs to the aspartate/ornithine carbamoyltransferase superfamily. OTCase family. As to quaternary structure, homododecamer.

It localises to the cytoplasm. It catalyses the reaction carbamoyl phosphate + L-ornithine = L-citrulline + phosphate + H(+). Its pathway is amino-acid biosynthesis; L-arginine biosynthesis; L-arginine from L-ornithine and carbamoyl phosphate: step 1/3. Reversibly catalyzes the transfer of the carbamoyl group from carbamoyl phosphate (CP) to the N(epsilon) atom of ornithine (ORN) to produce L-citrulline. The protein is Ornithine carbamoyltransferase (argF) of Moritella profunda.